Reading from the N-terminus, the 545-residue chain is Chaperonin GroEL 1 (545 aa).

ATP is bound by residues Thr29–Pro32, Asp86–Thr90, Gly413, Asn477–Ala479, and Asp493.

The protein belongs to the chaperonin (HSP60) family. In terms of assembly, forms a cylinder of 14 subunits composed of two heptameric rings stacked back-to-back. Interacts with the co-chaperonin GroES.

The protein resides in the cytoplasm. The enzyme catalyses ATP + H2O + a folded polypeptide = ADP + phosphate + an unfolded polypeptide.. Functionally, together with its co-chaperonin GroES, plays an essential role in assisting protein folding. The GroEL-GroES system forms a nano-cage that allows encapsulation of the non-native substrate proteins and provides a physical environment optimized to promote and accelerate protein folding. The sequence is that of Chaperonin GroEL 1 from Arthrobacter sp. (strain FB24).